Consider the following 479-residue polypeptide: Nuclear receptor subfamily 6 group A member 1 (479 aa).

The tract at residues 1–32 is disordered; that stretch reads MERDERPPSGGGGGGGSAGFLEPPAALPPPPR. A compositionally biased stretch (gly residues) spans 9–18; that stretch reads SGGGGGGGSA. Residues 57–132 constitute a DNA-binding region (nuclear receptor); it reads QRTCLICGDR…MGMNRKAIRE (76 aa). Residues cysteine 60, cysteine 63, cysteine 77, cysteine 80, cysteine 96, cysteine 102, cysteine 112, and cysteine 115 each contribute to the Zn(2+) site. 2 consecutive NR C4-type zinc fingers follow at residues 60–80 and 96–120; these read CLIC…CEGC and CSRD…LLKC. Disordered stretches follow at residues 131 to 150 and 162 to 198; these read REDG…QISE and FEEE…TLSS. A compositionally biased stretch (basic and acidic residues) spans 165–177; the sequence is EANHWSNHGDSDH. The interval 172 to 252 is sufficient for interaction with UIMC1; that stretch reads HGDSDHSSPG…RSLDPQSYSL (81 aa). The segment covering 178–198 has biased composition (polar residues); that stretch reads SSPGNRASESNQPSPGSTLSS. The NR LBD domain maps to 248–479; that stretch reads QSYSLIHQLV…HSCKTSVGKE (232 aa).

It belongs to the nuclear hormone receptor family. NR6 subfamily. In terms of assembly, homodimer. Interacts with UIMC1.

It localises to the nucleus. Functionally, orphan nuclear receptor that binds to a response element containing the sequence 5'-TCAAGGTCA-3'. Acts as a regulator of embryonic stem cell pluripotency by mediating repression of POU5F1/OCT4: binds to the DR0 element within the POU5F1/OCT4 promoter and inhibits POU5F1/OCT4 expression during embryonic stem cell differentiation. Involved in the regulation of gene expression in germ cell development during gametogenesis. In Sus scrofa (Pig), this protein is Nuclear receptor subfamily 6 group A member 1 (NR6A1).